A 204-amino-acid chain; its full sequence is Small ribosomal subunit protein uS4 (204 aa).

Residues 21–45 (GRPKSPINKREYGPGQHGQRRKKPS) are disordered. One can recognise an S4 RNA-binding domain in the interval 93 to 156 (RRLDAVVYRM…KQLAMVLDSV (64 aa)).

Belongs to the universal ribosomal protein uS4 family. Part of the 30S ribosomal subunit. Contacts protein S5. The interaction surface between S4 and S5 is involved in control of translational fidelity.

In terms of biological role, one of the primary rRNA binding proteins, it binds directly to 16S rRNA where it nucleates assembly of the body of the 30S subunit. With S5 and S12 plays an important role in translational accuracy. This is Small ribosomal subunit protein uS4 from Acidiphilium cryptum (strain JF-5).